The chain runs to 924 residues: Protein translocase subunit SecA (924 aa).

ATP is bound by residues Gln-87, 105–109 (GEGKT), and Asp-515. Residues Cys-908, Cys-910, Cys-919, and His-920 each contribute to the Zn(2+) site.

This sequence belongs to the SecA family. As to quaternary structure, monomer and homodimer. Part of the essential Sec protein translocation apparatus which comprises SecA, SecYEG and auxiliary proteins SecDF-YajC and YidC. Requires Zn(2+) as cofactor.

It is found in the cell inner membrane. The protein resides in the cytoplasm. The enzyme catalyses ATP + H2O + cellular proteinSide 1 = ADP + phosphate + cellular proteinSide 2.. Functionally, part of the Sec protein translocase complex. Interacts with the SecYEG preprotein conducting channel. Has a central role in coupling the hydrolysis of ATP to the transfer of proteins into and across the cell membrane, serving both as a receptor for the preprotein-SecB complex and as an ATP-driven molecular motor driving the stepwise translocation of polypeptide chains across the membrane. The sequence is that of Protein translocase subunit SecA from Cupriavidus pinatubonensis (strain JMP 134 / LMG 1197) (Cupriavidus necator (strain JMP 134)).